The primary structure comprises 387 residues: Cysteine desulfurase IscS (387 aa).

Pyridoxal 5'-phosphate-binding positions include 73 to 74 (AT), Asn155, Gln183, and 203 to 205 (SAH). Lys206 bears the N6-(pyridoxal phosphate)lysine mark. Thr241 is a pyridoxal 5'-phosphate binding site. Residue Cys328 is the Cysteine persulfide intermediate of the active site. Residue Cys328 participates in [2Fe-2S] cluster binding.

This sequence belongs to the class-V pyridoxal-phosphate-dependent aminotransferase family. NifS/IscS subfamily. Homodimer. Forms a heterotetramer with IscU, interacts with other sulfur acceptors. Pyridoxal 5'-phosphate serves as cofactor.

Its subcellular location is the cytoplasm. The catalysed reaction is (sulfur carrier)-H + L-cysteine = (sulfur carrier)-SH + L-alanine. The protein operates within cofactor biosynthesis; iron-sulfur cluster biosynthesis. Its function is as follows. Master enzyme that delivers sulfur to a number of partners involved in Fe-S cluster assembly, tRNA modification or cofactor biosynthesis. Catalyzes the removal of elemental sulfur atoms from cysteine to produce alanine. Functions as a sulfur delivery protein for Fe-S cluster synthesis onto IscU, an Fe-S scaffold assembly protein, as well as other S acceptor proteins. This chain is Cysteine desulfurase IscS, found in Helicobacter pylori (strain Shi470).